Here is a 420-residue protein sequence, read N- to C-terminus: Pyridinium-3,5-bisthiocarboxylic acid mononucleotide nickel insertion protein (420 aa).

Positions 81–104 are disordered; that stretch reads NHEHKHNHHEIKNDEPAHSHEHHH. Residues 90 to 99 are compositionally biased toward basic and acidic residues; sequence EIKNDEPAHS.

It belongs to the LarC family.

The catalysed reaction is Ni(II)-pyridinium-3,5-bisthiocarboxylate mononucleotide = pyridinium-3,5-bisthiocarboxylate mononucleotide + Ni(2+). Its function is as follows. Involved in the biosynthesis of a nickel-pincer cofactor ((SCS)Ni(II) pincer complex). Binds Ni(2+), and functions in nickel delivery to pyridinium-3,5-bisthiocarboxylic acid mononucleotide (P2TMN), to form the mature cofactor. Is thus probably required for the activation of nickel-pincer cofactor-dependent enzymes. In Clostridium acetobutylicum (strain ATCC 824 / DSM 792 / JCM 1419 / IAM 19013 / LMG 5710 / NBRC 13948 / NRRL B-527 / VKM B-1787 / 2291 / W), this protein is Pyridinium-3,5-bisthiocarboxylic acid mononucleotide nickel insertion protein.